The sequence spans 139 residues: UDP-glucose 4-epimerase (139 aa).

Residues Tyr-11–Ile-12, Asp-31–Ser-36, Asp-58–Ile-59, Phe-80–Lys-84, Asn-99, and Ser-124 contribute to the NAD(+) site. Ser-124 is a substrate binding site. The Proton acceptor role is filled by Tyr-136.

Belongs to the NAD(P)-dependent epimerase/dehydratase family. In terms of assembly, homodimer. The cofactor is NAD(+).

The enzyme catalyses UDP-alpha-D-glucose = UDP-alpha-D-galactose. Its pathway is carbohydrate metabolism; galactose metabolism. Its function is as follows. Involved in the metabolism of galactose. Catalyzes the conversion of UDP-galactose (UDP-Gal) to UDP-glucose (UDP-Glc) through a mechanism involving the transient reduction of NAD. The protein is UDP-glucose 4-epimerase (galE) of Klebsiella pneumoniae.